Consider the following 358-residue polypeptide: Chondroadherin (358 aa).

Residues 1–20 (MARVLLLSLVFLAILLPALA) form the signal peptide. Residues 21–50 (ACPQNCHCHGDLQHVICDKVGLQKIPKVSE) enclose the LRRNT domain. Residues Cys22 and Cys37 are joined by a disulfide bond. LRR repeat units follow at residues 51–72 (TTKL…SFRT), 75–96 (NLVS…AFRG), 99–120 (QLIY…AFDD), 123–144 (ELTY…LLSP), 147–168 (NLFI…AFQG), 171–192 (DLRW…SLDD), 195–216 (NLAK…ALSK), 219–240 (VVEE…AFQS), 244–265 (YLET…AFAG), and 268–289 (TLKH…FPFD). Ser143 carries an O-linked (GalNAc...) serine glycan. Residues 299 to 347 (NPWKCTCQLRGLRRWLEAKTSRPDATCSSPAKFKGQRIRDTDALRSCKS) enclose the LRRCT domain. Intrachain disulfides connect Cys303–Cys345 and Cys305–Cys325. Positions 321 to 358 (PDATCSSPAKFKGQRIRDTDALRSCKSPTKRSKKAGRH) are disordered. Over residues 348-358 (PTKRSKKAGRH) the composition is skewed to basic residues.

It belongs to the small leucine-rich proteoglycan (SLRP) family. SLRP class IV subfamily. As to quaternary structure, mostly monomeric. Present in femoral head and rib cartilage, as well as in tendon. Detected in bone marrow.

It localises to the secreted. It is found in the extracellular space. The protein localises to the extracellular matrix. Functionally, promotes attachment of chondrocytes, fibroblasts, and osteoblasts. This binding is mediated (at least for chondrocytes and fibroblasts) by the integrin alpha(2)beta(1). May play an important role in the regulation of chondrocyte growth and proliferation. This is Chondroadherin (Chad) from Rattus norvegicus (Rat).